The following is a 178-amino-acid chain: Caveolin-1 (178 aa).

An N-acetylserine modification is found at serine 2. Serine 2 carries the post-translational modification Phosphoserine. The segment at 2-94 (SGGKYVDSEG…WKASFTTFTV (93 aa)) is required for homooligomerization. Over 2 to 104 (SGGKYVDSEG…TKYWFYRLLS (103 aa)) the chain is Cytoplasmic. Lysine 5 carries the N6-acetyllysine; alternate modification. Residue lysine 5 forms a Glycyl lysine isopeptide (Lys-Gly) (interchain with G-Cter in ubiquitin); alternate linkage. Tyrosine 6 is subject to Phosphotyrosine. Serine 9 carries the phosphoserine modification. Tyrosine 14 is modified (phosphotyrosine; by ABL1). Tyrosine 25 bears the Phosphotyrosine mark. Glycyl lysine isopeptide (Lys-Gly) (interchain with G-Cter in ubiquitin) cross-links involve residues lysine 26 and lysine 30. A Phosphoserine modification is found at serine 37. Glycyl lysine isopeptide (Lys-Gly) (interchain with G-Cter in ubiquitin) cross-links involve residues lysine 39, lysine 47, and lysine 57. The interval 82–94 (DGIWKASFTTFTV) is interaction with CAVIN3. An intramembrane region (helical) is located at residues 105-125 (ALFGIPMALVWGIYFAILSFL). Residues 126–178 (HIWAVVPCIKSFLIEIQCISRVYSIYVHTVCDPLFEAVGKIFSNVRINLQKEI) lie on the Cytoplasmic side of the membrane. The tract at residues 131–142 (VPCIKSFLIEIQ) is interacts with SPRY1, SPRY2, SPRY3 and SPRY4. S-palmitoyl cysteine attachment occurs at residues cysteine 133, cysteine 143, and cysteine 156. The interacts with SPRY1, SPRY2, and SPRY4 stretch occupies residues 149–160 (SIYVHTVCDPLF). The interacts with SPRY1, SPRY2, SPRY3 and SPRY4 stretch occupies residues 167–178 (FSNVRINLQKEI).

Belongs to the caveolin family. Homooligomer. Interacts with GLIPR2. Interacts with NOSTRIN. Interacts with SNAP25 and STX1A. Interacts (via the N-terminus) with DPP4; the interaction is direct. Interacts with CTNNB1, CDH1 and JUP. Interacts with PACSIN2; this interaction induces membrane tubulation. Interacts with SLC7A9. Interacts with BMX and BTK. Interacts with TGFBR1. Interacts with CAVIN3 (via leucine-zipper domain) in a cholesterol-sensitive manner. Interacts with CAVIN1. Interacts with EHD2 in a cholesterol-dependent manner. Forms a ternary complex with UBXN6 and VCP; mediates CAV1 targeting to lysosomes for degradation. Interacts with ABCG1; this interaction regulates ABCG1-mediated cholesterol efflux. Interacts with NEU3; this interaction enhances NEU3 sialidase activity within caveola. Interacts (via C-terminus) with SPRY1, SPRY2 (via C-terminus), SPRY3, and SPRY4. Interacts with IGFBP5; this interaction allows trafficking of IGFBP5 from the plasma membrane to the nucleus. Post-translationally, phosphorylated at Tyr-14 by ABL1 in response to oxidative stress. Ubiquitinated. Undergo monoubiquitination and multi- and/or polyubiquitination. Monoubiquitination of N-terminal lysines promotes integration in a ternary complex with UBXN6 and VCP which promotes oligomeric CAV1 targeting to lysosomes for degradation. Ubiquitinated by ZNRF1; leading to degradation and modulation of the TLR4-mediated immune response.

The protein localises to the golgi apparatus membrane. The protein resides in the cell membrane. It is found in the membrane. Its subcellular location is the caveola. It localises to the membrane raft. Its function is as follows. May act as a scaffolding protein within caveolar membranes. Forms a stable heterooligomeric complex with CAV2 that targets to lipid rafts and drives caveolae formation. Mediates the recruitment of CAVIN proteins (CAVIN1/2/3/4) to the caveolae. Interacts directly with G-protein alpha subunits and can functionally regulate their activity. Involved in the costimulatory signal essential for T-cell receptor (TCR)-mediated T-cell activation. Its binding to DPP4 induces T-cell proliferation and NF-kappa-B activation in a T-cell receptor/CD3-dependent manner. Recruits CTNNB1 to caveolar membranes and may regulate CTNNB1-mediated signaling through the Wnt pathway. Negatively regulates TGFB1-mediated activation of SMAD2/3 by mediating the internalization of TGFBR1 from membrane rafts leading to its subsequent degradation. Binds 20(S)-hydroxycholesterol (20(S)-OHC). This is Caveolin-1 (CAV1) from Papio anubis (Olive baboon).